The chain runs to 78 residues: DNA-directed RNA polymerase subunit Rpo5 (78 aa).

The protein belongs to the archaeal Rpo5/eukaryotic RPB5 RNA polymerase subunit family. In terms of assembly, part of the RNA polymerase complex.

The protein resides in the cytoplasm. The enzyme catalyses RNA(n) + a ribonucleoside 5'-triphosphate = RNA(n+1) + diphosphate. DNA-dependent RNA polymerase (RNAP) catalyzes the transcription of DNA into RNA using the four ribonucleoside triphosphates as substrates. This Methanococcus vannielii (strain ATCC 35089 / DSM 1224 / JCM 13029 / OCM 148 / SB) protein is DNA-directed RNA polymerase subunit Rpo5.